The chain runs to 176 residues: NAD(P)H-quinone oxidoreductase subunit 6, chloroplastic (176 aa).

Transmembrane regions (helical) follow at residues 10-30 (FLLVFLGSGLILGGLGVVLLP), 32-52 (PIYSAFSLGLVLVCTSLFYIL), 61-81 (AQLLIYVGAINVLIIFAVMFM), 92-112 (LWTVGNGITSMVCISLFISLI), and 152-172 (FFLPFELISIILLVALIGAIA).

The protein belongs to the complex I subunit 6 family. In terms of assembly, NDH is composed of at least 16 different subunits, 5 of which are encoded in the nucleus.

The protein localises to the plastid. The protein resides in the chloroplast thylakoid membrane. It catalyses the reaction a plastoquinone + NADH + (n+1) H(+)(in) = a plastoquinol + NAD(+) + n H(+)(out). The enzyme catalyses a plastoquinone + NADPH + (n+1) H(+)(in) = a plastoquinol + NADP(+) + n H(+)(out). In terms of biological role, NDH shuttles electrons from NAD(P)H:plastoquinone, via FMN and iron-sulfur (Fe-S) centers, to quinones in the photosynthetic chain and possibly in a chloroplast respiratory chain. The immediate electron acceptor for the enzyme in this species is believed to be plastoquinone. Couples the redox reaction to proton translocation, and thus conserves the redox energy in a proton gradient. This Solanum bulbocastanum (Wild potato) protein is NAD(P)H-quinone oxidoreductase subunit 6, chloroplastic (ndhG).